Reading from the N-terminus, the 822-residue chain is Epidermal growth factor receptor kinase substrate 8 (822 aa).

2 stretches are compositionally biased toward polar residues: residues 1 to 10 (MNGHISNHPS) and 17 to 30 (SQMN…TFSQ). A disordered region spans residues 1-39 (MNGHISNHPSSFGMYPSQMNGYGSSPTFSQTDREHGSKT). S58 carries the post-translational modification Phosphoserine. A PTB domain is found at 64-194 (QYRVEHLTTF…SDSKGGKQKR (131 aa)). 2 disordered regions span residues 202–225 (ISNA…GTVT) and 298–320 (SKRK…TLRA). Residues 208–221 (SIPPPPRAPAPAPP) are compositionally biased toward pro residues. The residue at position 223 (T223) is a Phosphothreonine. The span at 299–309 (KRKKNKKGKRK) shows a compositional bias: basic residues. T317 carries the post-translational modification Phosphothreonine. S476 is subject to Phosphoserine. Positions 531-590 (QPKKYAKSKYDFVARNNSELSVLKDDILEILDDRKQWWKVRNASGDSGFVPNNILDIVRP) constitute an SH3 domain. Residues 612–689 (EYGPRPADTP…VDRRKSQMEE (78 aa)) are disordered. Pro residues predominate over residues 618-645 (ADTPPAPSPPPTPAPVPVPLPPSTPAPV). S625 is subject to Phosphoserine. Position 629 is a phosphothreonine; by MAPK (T629). An effector region region spans residues 649–822 (KVPANITRQN…VESFDEGSSH (174 aa)). Phosphoserine occurs at positions 659, 662, and 685. Residues 671 to 687 (DSQRHKQLPVDRRKSQM) are compositionally biased toward basic and acidic residues. The interval 680-698 (VDRRKSQMEEVQDELIHRL) is amphipathic helix. 4 helix bundle regions span residues 718 to 738 (VINI…QSKG), 752 to 757 (GAQLFS), 762 to 767 (ELRTVC), and 766 to 785 (VCPE…AALE). The tract at residues 787–822 (SSGSSELQEIMRRRQEKISAAASDSGVESFDEGSSH) is disordered. Phosphoserine occurs at positions 811 and 815.

Belongs to the EPS8 family. Homodimer. Part of a complex consisting of ABI1, EPS8 and SOS1. Interacts with MYO15A and WHRN. Interacts with LANCL1. Interacts with EGFR; mediates EPS8 phosphorylation. Interacts with BAIAP2. Interacts with SHB. Ubiquitinated by the SCF(FBXW5) E3 ubiquitin-protein ligase complex during G2 phase, leading to its transient degradation and subsequent cell shape changes required to allow mitotic progression. Reappears at the midzone of dividing cells. In terms of processing, phosphorylation at Ser-625 and Thr-629 by MAPK following BDNF treatment promotes removal from actin and filopodia formation. Phosphorylated by several receptor tyrosine kinases. As to expression, expressed in all tissues analyzed, including heart, brain, placenta, lung, liver, skeletal muscle, kidney and pancreas. Expressed in all epithelial and fibroblastic lines examined and in some, but not all, hematopoietic cells.

The protein localises to the cytoplasm. It localises to the cell cortex. The protein resides in the cell projection. It is found in the ruffle membrane. Its subcellular location is the growth cone. The protein localises to the stereocilium. It localises to the synapse. The protein resides in the synaptosome. Signaling adapter that controls various cellular protrusions by regulating actin cytoskeleton dynamics and architecture. Depending on its association with other signal transducers, can regulate different processes. Together with SOS1 and ABI1, forms a trimeric complex that participates in transduction of signals from Ras to Rac by activating the Rac-specific guanine nucleotide exchange factor (GEF) activity. Acts as a direct regulator of actin dynamics by binding actin filaments and has both barbed-end actin filament capping and actin bundling activities depending on the context. Displays barbed-end actin capping activity when associated with ABI1, thereby regulating actin-based motility process: capping activity is auto-inhibited and inhibition is relieved upon ABI1 interaction. Also shows actin bundling activity when associated with BAIAP2, enhancing BAIAP2-dependent membrane extensions and promoting filopodial protrusions. Involved in the regulation of processes such as axonal filopodia growth, stereocilia length, dendritic cell migration and cancer cell migration and invasion. Acts as a regulator of axonal filopodia formation in neurons: in the absence of neurotrophic factors, negatively regulates axonal filopodia formation via actin-capping activity. In contrast, it is phosphorylated in the presence of BDNF leading to inhibition of its actin-capping activity and stimulation of filopodia formation. Component of a complex with WHRN and MYO15A that localizes at stereocilia tips and is required for elongation of the stereocilia actin core. Indirectly involved in cell cycle progression; its degradation following ubiquitination being required during G2 phase to promote cell shape changes. This Homo sapiens (Human) protein is Epidermal growth factor receptor kinase substrate 8 (EPS8).